The chain runs to 355 residues: tRNA N6-adenosine threonylcarbamoyltransferase (355 aa).

Residues H113 and H117 each coordinate Fe cation. Substrate-binding positions include 135-139, D168, G181, and N279; that span reads LASGG. Residue D307 participates in Fe cation binding.

Belongs to the KAE1 / TsaD family. Fe(2+) is required as a cofactor.

It is found in the cytoplasm. The catalysed reaction is L-threonylcarbamoyladenylate + adenosine(37) in tRNA = N(6)-L-threonylcarbamoyladenosine(37) in tRNA + AMP + H(+). Functionally, required for the formation of a threonylcarbamoyl group on adenosine at position 37 (t(6)A37) in tRNAs that read codons beginning with adenine. Is involved in the transfer of the threonylcarbamoyl moiety of threonylcarbamoyl-AMP (TC-AMP) to the N6 group of A37, together with TsaE and TsaB. TsaD likely plays a direct catalytic role in this reaction. The polypeptide is tRNA N6-adenosine threonylcarbamoyltransferase (Bradyrhizobium sp. (strain BTAi1 / ATCC BAA-1182)).